The sequence spans 942 residues: Leucine--tRNA ligase (942 aa).

Residues 41 to 51 carry the 'HIGH' region motif; it reads PYLNGVLHAGH. Residues 633–637 carry the 'KMSKS' region motif; it reads KLSKS. Lys636 is a binding site for ATP.

It belongs to the class-I aminoacyl-tRNA synthetase family.

Its subcellular location is the cytoplasm. It catalyses the reaction tRNA(Leu) + L-leucine + ATP = L-leucyl-tRNA(Leu) + AMP + diphosphate. This is Leucine--tRNA ligase from Methanocaldococcus jannaschii (strain ATCC 43067 / DSM 2661 / JAL-1 / JCM 10045 / NBRC 100440) (Methanococcus jannaschii).